Here is a 237-residue protein sequence, read N- to C-terminus: tRNA1(Val) (adenine(37)-N6)-methyltransferase (237 aa).

It belongs to the methyltransferase superfamily. tRNA (adenine-N(6)-)-methyltransferase family.

The protein resides in the cytoplasm. The enzyme catalyses adenosine(37) in tRNA1(Val) + S-adenosyl-L-methionine = N(6)-methyladenosine(37) in tRNA1(Val) + S-adenosyl-L-homocysteine + H(+). Functionally, specifically methylates the adenine in position 37 of tRNA(1)(Val) (anticodon cmo5UAC). The chain is tRNA1(Val) (adenine(37)-N6)-methyltransferase from Parabacteroides distasonis (strain ATCC 8503 / DSM 20701 / CIP 104284 / JCM 5825 / NCTC 11152).